Consider the following 336-residue polypeptide: tRNA N6-adenosine threonylcarbamoyltransferase (336 aa).

The Fe cation site is built by His-111 and His-115. Residues Leu-133–Gly-137, Asp-166, Gly-179, and Asn-276 contribute to the substrate site. Residue Asp-301 coordinates Fe cation.

The protein belongs to the KAE1 / TsaD family. Fe(2+) serves as cofactor.

Its subcellular location is the cytoplasm. The catalysed reaction is L-threonylcarbamoyladenylate + adenosine(37) in tRNA = N(6)-L-threonylcarbamoyladenosine(37) in tRNA + AMP + H(+). In terms of biological role, required for the formation of a threonylcarbamoyl group on adenosine at position 37 (t(6)A37) in tRNAs that read codons beginning with adenine. Is involved in the transfer of the threonylcarbamoyl moiety of threonylcarbamoyl-AMP (TC-AMP) to the N6 group of A37, together with TsaE and TsaB. TsaD likely plays a direct catalytic role in this reaction. This is tRNA N6-adenosine threonylcarbamoyltransferase from Wolbachia pipientis subsp. Culex pipiens (strain wPip).